The sequence spans 544 residues: Probable protein kinase UbiB (544 aa).

A Protein kinase domain is found at 123–501 (DFDLVPLASA…KRQQATGKFL (379 aa)). ATP-binding positions include 129-137 (LASASIAQV) and Lys-152. The active-site Proton acceptor is the Asp-287. 2 consecutive transmembrane segments (helical) span residues 496-516 (ATGKFLFGVGATLVVCSAILV) and 519-539 (TYEQLSLATAIAGVTFWLFSW).

This sequence belongs to the ABC1 family. UbiB subfamily.

Its subcellular location is the cell inner membrane. Its pathway is cofactor biosynthesis; ubiquinone biosynthesis [regulation]. In terms of biological role, is probably a protein kinase regulator of UbiI activity which is involved in aerobic coenzyme Q (ubiquinone) biosynthesis. The sequence is that of Probable protein kinase UbiB from Vibrio vulnificus (strain YJ016).